Here is a 255-residue protein sequence, read N- to C-terminus: uncharacterized protein (255 aa).

An HTH deoR-type domain is found at 4-59; that stretch reads RNERLNLIRKRVDQYGQVAVKDLAIFLQVTPETVRKDLETLENDKLITRTHGGAIQ. Positions 21-40 form a DNA-binding region, H-T-H motif; it reads VAVKDLAIFLQVTPETVRKD.

This is an uncharacterized protein from Staphylococcus epidermidis (strain ATCC 12228 / FDA PCI 1200).